The following is a 434-amino-acid chain: Double-stranded RNA-binding protein 2 (434 aa).

2 DRBM domains span residues 1–70 and 87–155; these read MYKN…ALSN and VYKN…SLKQ. The disordered stretch occupies residues 402–434; that stretch reads EKTASKETERAEFKDSSKGEPETARERLENLKI.

Heterodimer with DRB1 or DRB5. Interacts with DCL1 and DCL5.

It localises to the cytoplasm. Its function is as follows. Binds double-stranded RNA. May be involved in RNA-mediated silencing. The polypeptide is Double-stranded RNA-binding protein 2 (DRB2) (Arabidopsis thaliana (Mouse-ear cress)).